The primary structure comprises 275 residues: 5'-nucleotidase SurE (275 aa).

A divalent metal cation is bound by residues aspartate 14, aspartate 15, serine 46, and asparagine 104.

The protein belongs to the SurE nucleotidase family. It depends on a divalent metal cation as a cofactor.

Its subcellular location is the cytoplasm. It catalyses the reaction a ribonucleoside 5'-phosphate + H2O = a ribonucleoside + phosphate. Its function is as follows. Nucleotidase that shows phosphatase activity on nucleoside 5'-monophosphates. The sequence is that of 5'-nucleotidase SurE from Synechocystis sp. (strain ATCC 27184 / PCC 6803 / Kazusa).